Consider the following 122-residue polypeptide: Large ribosomal subunit protein uL14c (122 aa).

The protein belongs to the universal ribosomal protein uL14 family. In terms of assembly, part of the 50S ribosomal subunit.

The protein resides in the plastid. It is found in the chloroplast. Functionally, binds to 23S rRNA. The sequence is that of Large ribosomal subunit protein uL14c from Populus trichocarpa (Western balsam poplar).